Here is a 308-residue protein sequence, read N- to C-terminus: Ribosomal RNA large subunit methyltransferase F (308 aa).

It belongs to the methyltransferase superfamily. METTL16/RlmF family.

It localises to the cytoplasm. The enzyme catalyses adenosine(1618) in 23S rRNA + S-adenosyl-L-methionine = N(6)-methyladenosine(1618) in 23S rRNA + S-adenosyl-L-homocysteine + H(+). In terms of biological role, specifically methylates the adenine in position 1618 of 23S rRNA. The chain is Ribosomal RNA large subunit methyltransferase F from Shigella boydii serotype 18 (strain CDC 3083-94 / BS512).